The primary structure comprises 379 residues: Carbamoyl phosphate synthase small chain (379 aa).

Positions 1 to 183 are CPSase; that stretch reads MTSQDRSEAV…EAYVVEPDGE (183 aa). L-glutamine is bound by residues S51, G235, and G237. The Glutamine amidotransferase type-1 domain maps to 185-379; sequence LYTVVAYDMG…FVELIQANKK (195 aa). C263 functions as the Nucleophile in the catalytic mechanism. L-glutamine is bound by residues F264, Q267, N305, G307, and F308. Residues H353 and E355 contribute to the active site.

This sequence belongs to the CarA family. Composed of two chains; the small (or glutamine) chain promotes the hydrolysis of glutamine to ammonia, which is used by the large (or ammonia) chain to synthesize carbamoyl phosphate. Tetramer of heterodimers (alpha,beta)4.

The enzyme catalyses hydrogencarbonate + L-glutamine + 2 ATP + H2O = carbamoyl phosphate + L-glutamate + 2 ADP + phosphate + 2 H(+). The catalysed reaction is L-glutamine + H2O = L-glutamate + NH4(+). Its pathway is amino-acid biosynthesis; L-arginine biosynthesis; carbamoyl phosphate from bicarbonate: step 1/1. The protein operates within pyrimidine metabolism; UMP biosynthesis via de novo pathway; (S)-dihydroorotate from bicarbonate: step 1/3. Functionally, small subunit of the glutamine-dependent carbamoyl phosphate synthetase (CPSase). CPSase catalyzes the formation of carbamoyl phosphate from the ammonia moiety of glutamine, carbonate, and phosphate donated by ATP, constituting the first step of 2 biosynthetic pathways, one leading to arginine and/or urea and the other to pyrimidine nucleotides. The small subunit (glutamine amidotransferase) binds and cleaves glutamine to supply the large subunit with the substrate ammonia. This is Carbamoyl phosphate synthase small chain from Corynebacterium diphtheriae (strain ATCC 700971 / NCTC 13129 / Biotype gravis).